Here is a 20-residue protein sequence, read N- to C-terminus: Dihydroorotase-like protein (20 aa).

The protein belongs to the metallo-dependent hydrolases superfamily. DHOase family. PyrC' subfamily. Heterododecamer of 6 active PyrB subunits and 6 non-catalytic PyrC' subunits.

Non-functional DHOase. The sequence is that of Dihydroorotase-like protein (pyrC') from Pseudomonas fluorescens biotype A.